The following is a 275-amino-acid chain: NH(3)-dependent NAD(+) synthetase (275 aa).

Gly-46–Ser-53 is a binding site for ATP. Asp-52 lines the Mg(2+) pocket. Arg-140 is a binding site for deamido-NAD(+). Thr-160 provides a ligand contact to ATP. Residue Glu-165 participates in Mg(2+) binding. Deamido-NAD(+) contacts are provided by Lys-173 and Asp-180. ATP-binding residues include Lys-189 and Thr-211. Residue His-260 to Lys-261 participates in deamido-NAD(+) binding.

Belongs to the NAD synthetase family. In terms of assembly, homodimer.

The catalysed reaction is deamido-NAD(+) + NH4(+) + ATP = AMP + diphosphate + NAD(+) + H(+). Its pathway is cofactor biosynthesis; NAD(+) biosynthesis; NAD(+) from deamido-NAD(+) (ammonia route): step 1/1. Catalyzes the ATP-dependent amidation of deamido-NAD to form NAD. Uses ammonia as a nitrogen source. The protein is NH(3)-dependent NAD(+) synthetase of Escherichia coli O7:K1 (strain IAI39 / ExPEC).